A 404-amino-acid polypeptide reads, in one-letter code: Acetate kinase (404 aa).

Residue Asn-7 coordinates Mg(2+). Lys-14 serves as a coordination point for ATP. Arg-98 is a substrate binding site. Asp-155 functions as the Proton donor/acceptor in the catalytic mechanism. Residues 214 to 218 (HLGNG), 289 to 291 (DLR), and 337 to 341 (GIGEN) each bind ATP. Residue Glu-390 coordinates Mg(2+).

The protein belongs to the acetokinase family. Homodimer. Mg(2+) is required as a cofactor. Requires Mn(2+) as cofactor.

The protein resides in the cytoplasm. The catalysed reaction is acetate + ATP = acetyl phosphate + ADP. The protein operates within metabolic intermediate biosynthesis; acetyl-CoA biosynthesis; acetyl-CoA from acetate: step 1/2. Its function is as follows. Catalyzes the formation of acetyl phosphate from acetate and ATP. Can also catalyze the reverse reaction. The sequence is that of Acetate kinase from Rippkaea orientalis (strain PCC 8801 / RF-1) (Cyanothece sp. (strain PCC 8801)).